We begin with the raw amino-acid sequence, 620 residues long: Glutathione-regulated potassium-efflux system protein KefC (620 aa).

12 consecutive transmembrane segments (helical) span residues 4-24, 26-46, 54-74, 90-110, 114-134, 149-169, 178-198, 218-238, 270-290, 294-314, 327-347, and 359-379; these read HTLI…PIAV, LGLG…PWGL, SILH…GLEL, GALQ…LLGL, VAEL…MQAM, FAVL…IPLL, MGAF…VVLL, VFSA…EEVG, GLLL…GTLI, LRIV…LWLI, WFAV…GAAQ, and SLTL…VILN. Residues 399-518 form the RCK N-terminal domain; that stretch reads QPRVIIAGFG…AGVEKPERET (120 aa). The disordered stretch occupies residues 597–620; it reads GWQGTEEGKHTGNMADEPETKPSS.

Belongs to the monovalent cation:proton antiporter 2 (CPA2) transporter (TC 2.A.37) family. KefC subfamily. Homodimer. Interacts with the regulatory subunit KefF.

It is found in the cell inner membrane. Its function is as follows. Pore-forming subunit of a potassium efflux system that confers protection against electrophiles. Catalyzes K(+)/H(+) antiport. The sequence is that of Glutathione-regulated potassium-efflux system protein KefC from Escherichia coli O17:K52:H18 (strain UMN026 / ExPEC).